Reading from the N-terminus, the 177-residue chain is Large ribosomal subunit protein uL6 (177 aa).

The protein belongs to the universal ribosomal protein uL6 family. In terms of assembly, part of the 50S ribosomal subunit.

Functionally, this protein binds to the 23S rRNA, and is important in its secondary structure. It is located near the subunit interface in the base of the L7/L12 stalk, and near the tRNA binding site of the peptidyltransferase center. The chain is Large ribosomal subunit protein uL6 from Acinetobacter baylyi (strain ATCC 33305 / BD413 / ADP1).